The sequence spans 353 residues: Protein RecA (353 aa).

67 to 74 (GPESSGKT) serves as a coordination point for ATP.

This sequence belongs to the RecA family.

It is found in the cytoplasm. In terms of biological role, can catalyze the hydrolysis of ATP in the presence of single-stranded DNA, the ATP-dependent uptake of single-stranded DNA by duplex DNA, and the ATP-dependent hybridization of homologous single-stranded DNAs. It interacts with LexA causing its activation and leading to its autocatalytic cleavage. This chain is Protein RecA, found in Chlamydia pneumoniae (Chlamydophila pneumoniae).